A 425-amino-acid chain; its full sequence is Protein cab-1 (425 aa).

Residues 1–11 are compositionally biased toward basic and acidic residues; that stretch reads MRYTFSDEKKA. 2 disordered regions span residues 1 to 20 and 214 to 251; these read MRYTFSDEKKATTTTTSRAK and LKKTQEKLSEQTPSAKANVESLESAMQTATGEPQVPQK. An AEX-3-binding region spans residues 205 to 424; it reads ENEIAKESEL…EVCNPNFAAQ (220 aa). A helical membrane pass occupies residues 300–320; that stretch reads LLLLAVGTVMCVGLIGTVAGG. Residues 334 to 355 form a disordered region; sequence DDGEYAPYAGTGPGFRKNKGNK.

The protein belongs to the NPDC1/cab-1 family. In terms of assembly, binds to the RAB3 GDP/GTP exchange factor aex-3. Expressed in a variety of neurons.

The protein localises to the membrane. This Caenorhabditis elegans protein is Protein cab-1 (cab-1).